The chain runs to 156 residues: NADH-ubiquinone oxidoreductase 20 kDa subunit (156 aa).

[4Fe-4S] cluster is bound by residues cysteine 33, cysteine 34, cysteine 98, and cysteine 128.

The protein belongs to the complex I 20 kDa subunit family. It depends on [4Fe-4S] cluster as a cofactor.

It is found in the mitochondrion. It catalyses the reaction a ubiquinone + NADH + 5 H(+)(in) = a ubiquinol + NAD(+) + 4 H(+)(out). The chain is NADH-ubiquinone oxidoreductase 20 kDa subunit (NAD10) from Paramecium tetraurelia.